We begin with the raw amino-acid sequence, 327 residues long: GMP reductase (327 aa).

The active-site Thioimidate intermediate is cysteine 176. Residue 205-228 (IIADGGIRTHGDIAKSIRFGASMV) participates in NADP(+) binding.

Belongs to the IMPDH/GMPR family. GuaC type 2 subfamily.

The enzyme catalyses IMP + NH4(+) + NADP(+) = GMP + NADPH + 2 H(+). Catalyzes the irreversible NADPH-dependent deamination of GMP to IMP. It functions in the conversion of nucleobase, nucleoside and nucleotide derivatives of G to A nucleotides, and in maintaining the intracellular balance of A and G nucleotides. The chain is GMP reductase from Streptococcus pyogenes serotype M49 (strain NZ131).